We begin with the raw amino-acid sequence, 254 residues long: 21S rRNA pseudouridine(2819) synthase (254 aa).

Residue Asp-71 is part of the active site.

This sequence belongs to the pseudouridine synthase RluA family.

It is found in the mitochondrion. The enzyme catalyses uridine(2819) in 21S rRNA = pseudouridine(2819) in 21S rRNA. Its function is as follows. Pseudouridylate synthase responsible for the pseudouridine-2819 formation in mitochondrial 21S rRNA. May modulate the efficiency or the fidelity of the mitochondrial translation machinery. This Saccharomyces cerevisiae (strain ATCC 204508 / S288c) (Baker's yeast) protein is 21S rRNA pseudouridine(2819) synthase (PUS5).